The following is a 325-amino-acid chain: Quinone oxidoreductase (325 aa).

This sequence belongs to the zinc-containing alcohol dehydrogenase family. Quinone oxidoreductase subfamily.

It catalyses the reaction 2 a quinone + NADPH + H(+) = 2 a 1,4-benzosemiquinone + NADP(+). The polypeptide is Quinone oxidoreductase (qor) (Pseudomonas aeruginosa (strain ATCC 15692 / DSM 22644 / CIP 104116 / JCM 14847 / LMG 12228 / 1C / PRS 101 / PAO1)).